An 837-amino-acid chain; its full sequence is Protein translocase subunit SecA 1 (837 aa).

ATP-binding positions include Q85, 103-107 (GEGKT), and D492. A compositionally biased stretch (basic and acidic residues) spans 787–806 (QEVAKGEAVHPKEDGEEPKR). The segment at 787-811 (QEVAKGEAVHPKEDGEEPKRKPVRK) is disordered. C821, C823, C832, and C833 together coordinate Zn(2+).

The protein belongs to the SecA family. Monomer and homodimer. Part of the essential Sec protein translocation apparatus which comprises SecA, SecYEG and auxiliary proteins SecDF. Other proteins may also be involved. The cofactor is Zn(2+).

It localises to the cell membrane. Its subcellular location is the cytoplasm. The catalysed reaction is ATP + H2O + cellular proteinSide 1 = ADP + phosphate + cellular proteinSide 2.. In terms of biological role, part of the Sec protein translocase complex. Interacts with the SecYEG preprotein conducting channel. Has a central role in coupling the hydrolysis of ATP to the transfer of proteins into and across the cell membrane, serving as an ATP-driven molecular motor driving the stepwise translocation of polypeptide chains across the membrane. The sequence is that of Protein translocase subunit SecA 1 from Geobacillus kaustophilus (strain HTA426).